A 337-amino-acid chain; its full sequence is Dolichyl-phosphate beta-glucosyltransferase ALG5C (337 aa).

Residues 1–6 (MNDLPP) are Lumenal-facing. The chain crosses the membrane as a helical span at residues 7–27 (IANLISNILFVLLIITFLYAL). The Cytoplasmic portion of the chain corresponds to 28-337 (CSRFVSDKTL…ADTPISDFEV (310 aa)).

The protein belongs to the glycosyltransferase 2 family.

It localises to the endoplasmic reticulum membrane. The enzyme catalyses a di-trans,poly-cis-dolichyl phosphate + UDP-alpha-D-glucose = a di-trans,poly-cis-dolichyl beta-D-glucosyl phosphate + UDP. It functions in the pathway protein modification; protein glycosylation. Its function is as follows. Dolichyl-phosphate beta-glucosyltransferase involved in the glycosylation of glycoproteins through the synthesis of dolichyl beta-D-glucosyl phosphate which serves as a sugar donor for transfer of three glucose residues to the Man-9-GlcNAc-2-PP-dolichol precursor to N-glycans. This Trichomonas vaginalis (strain ATCC PRA-98 / G3) protein is Dolichyl-phosphate beta-glucosyltransferase ALG5C.